Reading from the N-terminus, the 316-residue chain is MSLMNWFEDKRRFGGLIGAFIEKATKGYIFSEREKDRYIKIDTTKGLWTRCDNCENMLYVRFLRQNKRICEECGYHLQMSSTERIELLIDRGTWYPMDEDMTARDVLKFSDEDSYKNRIAFYQKRTGLTDAIQTGIGQLNGIPIALGVMDFQFMGGSMGSVVGEKITRLIEYATRASMPLIIVCSSGGARMQEGTLSLMQMAKISSVLQIHQAQKRLLYIAILTYPTTGGVTASFGMLGDIIIAEPKAYIAFAGKRVIEQTLRQKIPDGFQVAESLFDHGLLDLIVPRNLLKGVLSEIFELYNAAPCKKFQNSFFK.

A CoA carboxyltransferase N-terminal domain is found at 47-316 (LWTRCDNCEN…CKKFQNSFFK (270 aa)). Positions 51, 54, 70, and 73 each coordinate Zn(2+). The segment at 51-73 (CDNCENMLYVRFLRQNKRICEEC) adopts a C4-type zinc-finger fold.

The protein belongs to the AccD/PCCB family. As to quaternary structure, acetyl-CoA carboxylase is a heterohexamer composed of biotin carboxyl carrier protein, biotin carboxylase and 2 subunits each of ACCase subunit alpha and ACCase plastid-coded subunit beta (accD). It depends on Zn(2+) as a cofactor.

It is found in the plastid. Its subcellular location is the chloroplast stroma. The catalysed reaction is N(6)-carboxybiotinyl-L-lysyl-[protein] + acetyl-CoA = N(6)-biotinyl-L-lysyl-[protein] + malonyl-CoA. The protein operates within lipid metabolism; malonyl-CoA biosynthesis; malonyl-CoA from acetyl-CoA: step 1/1. In terms of biological role, component of the acetyl coenzyme A carboxylase (ACC) complex. Biotin carboxylase (BC) catalyzes the carboxylation of biotin on its carrier protein (BCCP) and then the CO(2) group is transferred by the transcarboxylase to acetyl-CoA to form malonyl-CoA. The chain is Acetyl-coenzyme A carboxylase carboxyl transferase subunit beta, chloroplastic from Marchantia polymorpha (Common liverwort).